The chain runs to 239 residues: Ribosomal RNA small subunit methyltransferase G (239 aa).

S-adenosyl-L-methionine contacts are provided by residues Gly-78, Phe-83, 129–130, and Arg-148; that span reads AE.

The protein belongs to the methyltransferase superfamily. RNA methyltransferase RsmG family.

Its subcellular location is the cytoplasm. In terms of biological role, specifically methylates the N7 position of a guanine in 16S rRNA. This is Ribosomal RNA small subunit methyltransferase G from Clostridium beijerinckii (strain ATCC 51743 / NCIMB 8052) (Clostridium acetobutylicum).